Consider the following 258-residue polypeptide: Transcription initiation factor TFIID subunit 9B (258 aa).

At Met-1 the chain carries N-acetylmethionine. A Phosphoserine modification is found at Ser-147. Phosphothreonine occurs at positions 159 and 174. At Ser-177 the chain carries Phosphoserine. Over residues 227–236 the composition is skewed to polar residues; it reads SSQSTATDSN. The tract at residues 227–258 is disordered; that stretch reads SSQSTATDSNPLKRKHDDDDDDDDDDDDNDTM. Residues 244–258 show a composition bias toward acidic residues; the sequence is DDDDDDDDDDDNDTM.

This sequence belongs to the TAF9 family. Binds TAF5 and TAF6. Component of TFIID and the TATA-binding protein-free TAF complex (TFTC). TFIID is composed of TATA binding protein (TBP) and a number of TBP-associated factors (TAFs). Binds N-terminal domain of p53/TP53 which is essential for transcription.

It localises to the nucleus. Essential for cell viability. TAF9 and TAF9L are involved in transcriptional activation as well as repression of distinct but overlapping sets of genes. May have a role in gene regulation associated with apoptosis. TAFs are components of the transcription factor IID (TFIID) complex, the TBP-free TAFII complex (TFTC), the PCAF histone acetylase complex and the STAGA transcription coactivator-HAT complex. TFIID or TFTC are essential for the regulation of RNA polymerase II-mediated transcription. The chain is Transcription initiation factor TFIID subunit 9B (Taf9b) from Rattus norvegicus (Rat).